A 183-amino-acid chain; its full sequence is Ribosome-recycling factor (183 aa).

The protein belongs to the RRF family.

It localises to the cytoplasm. In terms of biological role, responsible for the release of ribosomes from messenger RNA at the termination of protein biosynthesis. May increase the efficiency of translation by recycling ribosomes from one round of translation to another. This chain is Ribosome-recycling factor, found in Buchnera aphidicola subsp. Baizongia pistaciae (strain Bp).